A 275-amino-acid polypeptide reads, in one-letter code: Voltage-dependent calcium channel gamma-7 subunit (275 aa).

4 helical membrane passes run 8–28 (ALTLLSSVFGACGLLLVGIAV), 103–123 (FPMVSLFLVFTAFVISNIGHI), 129–149 (ILAFVSGIFFILSGLSLVVGL), and 179–199 (FAFAASSFLLKEGAGVMSVYL). Phosphoserine occurs at positions 222, 225, and 273.

It belongs to the PMP-22/EMP/MP20 family. CACNG subfamily. As to quaternary structure, interacts with CACNA1C. Identified in a complex with the L-type calcium channel subunits CACNA1C, CACNA2D1 and either CACNB1 or CACNB2. Acts as an auxiliary subunit for AMPA-selective glutamate receptors (AMPARs), such as GRIA1 and GRIA2. Detected in heart left ventricle. Widely expressed.

The protein resides in the cell membrane. Functionally, regulates the activity of L-type calcium channels that contain CACNA1C as pore-forming subunit. Regulates the trafficking and gating properties of AMPA-selective glutamate receptors (AMPARs). Promotes their targeting to the cell membrane and synapses and modulates their gating properties by slowing their rates of activation, deactivation and desensitization and by mediating their resensitization. Displays subunit-specific AMPA receptor regulation. Shows specificity only for GRIA1 and GRIA2. The sequence is that of Voltage-dependent calcium channel gamma-7 subunit (CACNG7) from Homo sapiens (Human).